The chain runs to 283 residues: MRGIWFSELQTPDLAISVRLNQTLHHEKTPYQELAVVDTEAYGRMLLLDNIIQTTVKDEFFYHEMIAHVPLNTHPNPRTALVIGGGDGGVVREIVKHPSIEKVTLVEIDARVVANAREYLPEIACGLDDARVEIRFEDGIEHVRQRENTYDVIIVDSTDPIGPAVGLFSAEFYRNVYRALKADGVFVAQTESPIFNSRLIRRIQRDLKEIFPIARLYLTTVPTYPGGLWAFSLGSKKYDPLEVDWRQAPKVATRYYTPAIHQAAFSLPPFVQEFLEAPEEEEF.

Residues Gly-3–Lys-236 enclose the PABS domain. Gln-32 is an S-methyl-5'-thioadenosine binding site. Spermidine contacts are provided by His-63 and Asp-87. S-methyl-5'-thioadenosine contacts are provided by residues Glu-107 and Asp-138–Gly-139. Catalysis depends on Asp-156, which acts as the Proton acceptor. Asp-156 to Asp-159 contacts spermidine. Pro-163 is an S-methyl-5'-thioadenosine binding site.

This sequence belongs to the spermidine/spermine synthase family. As to quaternary structure, homodimer or homotetramer.

It localises to the cytoplasm. The catalysed reaction is S-adenosyl 3-(methylsulfanyl)propylamine + putrescine = S-methyl-5'-thioadenosine + spermidine + H(+). Its pathway is amine and polyamine biosynthesis; spermidine biosynthesis; spermidine from putrescine: step 1/1. In terms of biological role, catalyzes the irreversible transfer of a propylamine group from the amino donor S-adenosylmethioninamine (decarboxy-AdoMet) to putrescine (1,4-diaminobutane) to yield spermidine. The protein is Polyamine aminopropyltransferase of Moorella thermoacetica (strain ATCC 39073 / JCM 9320).